The primary structure comprises 122 residues: UPF0102 protein CA_C1763 (122 aa).

Belongs to the UPF0102 family.

This chain is UPF0102 protein CA_C1763, found in Clostridium acetobutylicum (strain ATCC 824 / DSM 792 / JCM 1419 / IAM 19013 / LMG 5710 / NBRC 13948 / NRRL B-527 / VKM B-1787 / 2291 / W).